Here is a 359-residue protein sequence, read N- to C-terminus: Peptide methionine sulfoxide reductase MsrA/MsrB (359 aa).

Residues 36–189 form a peptide methionine sulfoxide reductase A region; the sequence is RVIYLAGGCF…PSGYCHIDLK (154 aa). Cys-44 is an active-site residue. A MsrB domain is found at 206–329; that stretch reads DEVLKKKLTK…NSAALRFIPL (124 aa). Residue Cys-318 is the Nucleophile of the active site.

In the N-terminal section; belongs to the MsrA Met sulfoxide reductase family. This sequence in the C-terminal section; belongs to the MsrB Met sulfoxide reductase family.

The enzyme catalyses L-methionyl-[protein] + [thioredoxin]-disulfide + H2O = L-methionyl-(S)-S-oxide-[protein] + [thioredoxin]-dithiol. It catalyses the reaction [thioredoxin]-disulfide + L-methionine + H2O = L-methionine (S)-S-oxide + [thioredoxin]-dithiol. It carries out the reaction L-methionyl-[protein] + [thioredoxin]-disulfide + H2O = L-methionyl-(R)-S-oxide-[protein] + [thioredoxin]-dithiol. Its function is as follows. Has an important function as a repair enzyme for proteins that have been inactivated by oxidation. Catalyzes the reversible oxidation-reduction of methionine sulfoxide in proteins to methionine. This is Peptide methionine sulfoxide reductase MsrA/MsrB (msrAB) from Helicobacter pylori (strain ATCC 700392 / 26695) (Campylobacter pylori).